The sequence spans 67 residues: Probable archaeal histone 3 (67 aa).

Interaction with DNA regions lie at residues 20–22 and 54–57; these read RVS and KTVK.

Belongs to the archaeal histone HMF family. In terms of assembly, homodimer or heterodimer with another histone. Dimers then assemble into higher oligomers, with the DNA wrapped around the protein core.

It localises to the cytoplasm. Its subcellular location is the chromosome. Its function is as follows. Binds and compact DNA (95 to 150 base pairs) to form nucleosome-like structures that contain positive DNA supercoils. Increases the resistance of DNA to thermal denaturation (in vitro). The chain is Probable archaeal histone 3 from Methanocaldococcus jannaschii (strain ATCC 43067 / DSM 2661 / JAL-1 / JCM 10045 / NBRC 100440) (Methanococcus jannaschii).